The sequence spans 100 residues: MVSLHSYLIVSAILFSIGTIGVLVRRNAIVIFMCVEMMLNAVNLTFIALSRHLGNIDGQIFVFFVMTVAAAEAAVGLALMIAFYKNRESIDVEDVKLMKL.

3 consecutive transmembrane segments (helical) span residues Leu4–Val24, Ile29–Leu49, and Ile60–Met80.

Belongs to the complex I subunit 4L family. NDH-1 is composed of 14 different subunits. Subunits NuoA, H, J, K, L, M, N constitute the membrane sector of the complex.

The protein resides in the cell inner membrane. It carries out the reaction a quinone + NADH + 5 H(+)(in) = a quinol + NAD(+) + 4 H(+)(out). Functionally, NDH-1 shuttles electrons from NADH, via FMN and iron-sulfur (Fe-S) centers, to quinones in the respiratory chain. The immediate electron acceptor for the enzyme in this species is believed to be ubiquinone. Couples the redox reaction to proton translocation (for every two electrons transferred, four hydrogen ions are translocated across the cytoplasmic membrane), and thus conserves the redox energy in a proton gradient. In Geobacter sulfurreducens (strain ATCC 51573 / DSM 12127 / PCA), this protein is NADH-quinone oxidoreductase subunit K 1.